The chain runs to 497 residues: MTDLHPARTRVAPSPTGDPHVGTAYMALFDKAWAQRTGGQFVLRIEDTDRTRLVADSEDQIYQTLEWLGLSPDESPLVGGPYEPYKQSERLDTYKPLVEKLIESGHAYRCWCSQERLKQLREERAAAKSPETGYDRMCLGMSKEERAKLPGFTETPVVRMLIPEDVDLEFDDLIRGTVRAPRPDDQVILKADGFPTYHMAVVVDDHLMGIDTVVRGEEWISSTPKHLLLYKWLGWEAPKFAHMPLLRNTDKSKISKRKNPAARLMWFREQGYLPEALRNFLQLLAYPTVAEGQEMEDFDSFVSRFDWGNVSTGGPVFDVTKLDWLNGQYIRSLDAEVLTDRVLDYADQMCQARHVLGRDLTQEDRCVIHAAMPLVRERLTLLSEALPKLAFLLTDDDALVFDEDSVAKLKAGADDIQHAAVEVLKGLDDFSADAIQAALRARLCDEMGIKPRLAFAPVRVAVTGSRVSPPLFEAMEILGKESTLRRMQRFEAEIDQK.

Residues 13 to 23 (PSPTGDPHVGT) carry the 'HIGH' region motif. The 'KMSKS' region signature appears at 253-257 (KISKR). Lysine 256 is a binding site for ATP.

It belongs to the class-I aminoacyl-tRNA synthetase family. Glutamate--tRNA ligase type 1 subfamily. Monomer.

Its subcellular location is the cytoplasm. The catalysed reaction is tRNA(Glu) + L-glutamate + ATP = L-glutamyl-tRNA(Glu) + AMP + diphosphate. In terms of biological role, catalyzes the attachment of glutamate to tRNA(Glu) in a two-step reaction: glutamate is first activated by ATP to form Glu-AMP and then transferred to the acceptor end of tRNA(Glu). The chain is Glutamate--tRNA ligase from Cutibacterium acnes (strain DSM 16379 / KPA171202) (Propionibacterium acnes).